The sequence spans 282 residues: MSSYENHQALDGLTLGKSTDYRDNYDASLLQGVPRSLNRDPLDLKADNLPFHGADIWTLYELSWLNAKGVPQVAVGHVELDYTSVNLIESKSFKLYLNSFNQTRFDSWDAVRQTLENDLRACAQGEVSVALYRLDELEGQPAAHFHGTCIDDQDITIDNYQFSTDYLENAASGEKVVEETLVSHLLKSNCLITHQPDWGSIQICYRGRKIDREKLLRYLVSFRHHNEFHEQCVERIFNDLLRFCQPEKLSVYARYTRRGGLDINPWRSNTDFVPATGRLVRQ.

88–90 (IES) provides a ligand contact to substrate. 90–91 (SK) is a binding site for NADPH. Cys190 acts as the Thioimide intermediate in catalysis. The active-site Proton donor is the Asp197. 229 to 230 (HE) contributes to the substrate binding site. 258–259 (RG) provides a ligand contact to NADPH.

The protein belongs to the GTP cyclohydrolase I family. QueF type 2 subfamily. Homodimer.

The protein localises to the cytoplasm. The catalysed reaction is 7-aminomethyl-7-carbaguanine + 2 NADP(+) = 7-cyano-7-deazaguanine + 2 NADPH + 3 H(+). Its pathway is tRNA modification; tRNA-queuosine biosynthesis. In terms of biological role, catalyzes the NADPH-dependent reduction of 7-cyano-7-deazaguanine (preQ0) to 7-aminomethyl-7-deazaguanine (preQ1). The polypeptide is NADPH-dependent 7-cyano-7-deazaguanine reductase (Citrobacter koseri (strain ATCC BAA-895 / CDC 4225-83 / SGSC4696)).